Consider the following 272-residue polypeptide: 1,4-dihydroxy-2-naphthoyl-CoA synthase (272 aa).

Substrate is bound by residues arginine 33, 72-76, tyrosine 84, 116-120, threonine 142, serine 148, tyrosine 245, and lysine 260; these read SGGDQ and YAIGG. 141–143 is a hydrogencarbonate binding site; that stretch reads QTG.

The protein belongs to the enoyl-CoA hydratase/isomerase family. MenB subfamily. It depends on hydrogencarbonate as a cofactor.

It catalyses the reaction 2-succinylbenzoyl-CoA + H(+) = 1,4-dihydroxy-2-naphthoyl-CoA + H2O. It functions in the pathway quinol/quinone metabolism; 1,4-dihydroxy-2-naphthoate biosynthesis; 1,4-dihydroxy-2-naphthoate from chorismate: step 6/7. Its pathway is quinol/quinone metabolism; menaquinone biosynthesis. Functionally, converts o-succinylbenzoyl-CoA (OSB-CoA) to 1,4-dihydroxy-2-naphthoyl-CoA (DHNA-CoA). This chain is 1,4-dihydroxy-2-naphthoyl-CoA synthase, found in Staphylococcus epidermidis (strain ATCC 12228 / FDA PCI 1200).